The sequence spans 298 residues: Iron/alpha-ketoglutarate-dependent dioxygenase ausO (298 aa).

Fe cation-binding residues include histidine 130, aspartate 132, and histidine 211.

It belongs to the PhyH family. Homodimer. The cofactor is Fe cation.

Its pathway is secondary metabolite biosynthesis; terpenoid biosynthesis. Functionally, iron/alpha-ketoglutarate-dependent dioxygenase; part of the gene cluster that mediates the biosynthesis of calidodehydroaustin, a fungal meroterpenoid. The first step of the pathway is the synthesis of 3,5-dimethylorsellinic acid by the polyketide synthase ausA. 3,5-dimethylorsellinic acid is then prenylated by the polyprenyl transferase ausN. Further epoxidation by the FAD-dependent monooxygenase ausM and cyclization by the probable terpene cyclase ausL lead to the formation of protoaustinoid A. Protoaustinoid A is then oxidized to spiro-lactone preaustinoid A3 by the combined action of the FAD-binding monooxygenases ausB and ausC, and the dioxygenase ausE. Acid-catalyzed keto-rearrangement and ring contraction of the tetraketide portion of preaustinoid A3 by ausJ lead to the formation of preaustinoid A4. The aldo-keto reductase ausK, with the help of ausH, is involved in the next step by transforming preaustinoid A4 into isoaustinone which is in turn hydroxylated by the P450 monooxygenase ausI to form austinolide. The cytochrome P450 monooxygenase ausG modifies austinolide to austinol. Austinol is further acetylated to austin by the O-acetyltransferase ausP, which spontaneously changes to dehydroaustin. The cytochrome P450 monooxygenase ausR then converts dehydroaustin is into 7-dehydrodehydroaustin. The hydroxylation catalyzed by ausR permits the O-acetyltransferase ausQ to add an additional acetyl group to the molecule, leading to the formation of acetoxydehydroaustin. The short chain dehydrogenase ausT catalyzes the reduction of the double bond present between carbon atoms 1 and 2 to convert 7-dehydrodehydroaustin into 1,2-dihydro-7-hydroxydehydroaustin. AusQ catalyzes not only an acetylation reaction but also the addition of the PKS ausV diketide product to 1,2-dihydro-7-hydroxydehydroaustin, forming precalidodehydroaustin. Finally, the iron/alpha-ketoglutarate-dependent dioxygenase converts precalidodehydroaustin into calidodehydroaustin. The chain is Iron/alpha-ketoglutarate-dependent dioxygenase ausO from Aspergillus calidoustus.